The chain runs to 410 residues: ATP phosphoribosyltransferase regulatory subunit (410 aa).

The protein belongs to the class-II aminoacyl-tRNA synthetase family. HisZ subfamily. As to quaternary structure, heteromultimer composed of HisG and HisZ subunits.

It is found in the cytoplasm. The protein operates within amino-acid biosynthesis; L-histidine biosynthesis; L-histidine from 5-phospho-alpha-D-ribose 1-diphosphate: step 1/9. Required for the first step of histidine biosynthesis. May allow the feedback regulation of ATP phosphoribosyltransferase activity by histidine. The sequence is that of ATP phosphoribosyltransferase regulatory subunit from Synechococcus sp. (strain JA-3-3Ab) (Cyanobacteria bacterium Yellowstone A-Prime).